A 268-amino-acid chain; its full sequence is NH(3)-dependent NAD(+) synthetase (268 aa).

Position 46–53 (46–53 (GVSGGQDS)) interacts with ATP. Aspartate 52 is a Mg(2+) binding site. Arginine 140 contacts deamido-NAD(+). Threonine 160 is an ATP binding site. Residue glutamate 165 coordinates Mg(2+). Lysine 173 and aspartate 180 together coordinate deamido-NAD(+). Lysine 189 lines the ATP pocket. Position 260–261 (260–261 (HK)) interacts with deamido-NAD(+).

This sequence belongs to the NAD synthetase family. As to quaternary structure, homodimer.

It carries out the reaction deamido-NAD(+) + NH4(+) + ATP = AMP + diphosphate + NAD(+) + H(+). It functions in the pathway cofactor biosynthesis; NAD(+) biosynthesis; NAD(+) from deamido-NAD(+) (ammonia route): step 1/1. Catalyzes the ATP-dependent amidation of deamido-NAD to form NAD. Uses ammonia as a nitrogen source. The chain is NH(3)-dependent NAD(+) synthetase from Buchnera aphidicola subsp. Acyrthosiphon pisum (strain APS) (Acyrthosiphon pisum symbiotic bacterium).